Here is a 986-residue protein sequence, read N- to C-terminus: Isoleucine--tRNA ligase (986 aa).

Residues 534 to 538 carry the 'KMSKS' region motif; the sequence is EMHKS. Position 537 (lysine 537) interacts with ATP.

Belongs to the class-I aminoacyl-tRNA synthetase family. IleS type 2 subfamily. In terms of assembly, monomer. Zn(2+) is required as a cofactor.

Its subcellular location is the cytoplasm. It carries out the reaction tRNA(Ile) + L-isoleucine + ATP = L-isoleucyl-tRNA(Ile) + AMP + diphosphate. Functionally, catalyzes the attachment of isoleucine to tRNA(Ile). As IleRS can inadvertently accommodate and process structurally similar amino acids such as valine, to avoid such errors it has two additional distinct tRNA(Ile)-dependent editing activities. One activity is designated as 'pretransfer' editing and involves the hydrolysis of activated Val-AMP. The other activity is designated 'posttransfer' editing and involves deacylation of mischarged Val-tRNA(Ile). The protein is Isoleucine--tRNA ligase (ileS) of Saccharolobus solfataricus (strain ATCC 35092 / DSM 1617 / JCM 11322 / P2) (Sulfolobus solfataricus).